The sequence spans 381 residues: Sulfite reductase, dissimilatory-type subunit beta (381 aa).

Residues cysteine 151, cysteine 188, cysteine 189, cysteine 193, cysteine 231, cysteine 258, cysteine 261, and cysteine 264 each coordinate [4Fe-4S] cluster. Cysteine 193 serves as a coordination point for siroheme. Residues asparagine 249–glycine 276 enclose the 4Fe-4S ferredoxin-type domain.

Heterohexamer of two alpha, two beta and two gamma subunits. It depends on [4Fe-4S] cluster as a cofactor. Siroheme serves as cofactor.

The catalysed reaction is [DsrC protein]-trisulfide + NAD(+) + 3 H2O = [DsrC protein]-dithiol + sulfite + NADH + 3 H(+). Functionally, catalyzes the reduction of sulfite to sulfide. This is the terminal oxidation reaction in sulfate respiration, a process catalyzed by the sulfate-reducing bacteria. This chain is Sulfite reductase, dissimilatory-type subunit beta (dsvB), found in Nitratidesulfovibrio vulgaris (strain ATCC 29579 / DSM 644 / CCUG 34227 / NCIMB 8303 / VKM B-1760 / Hildenborough) (Desulfovibrio vulgaris).